Here is an 885-residue protein sequence, read N- to C-terminus: Disease resistance protein RFL1 (885 aa).

A coiled-coil region spans residues 27–61 (SYIQNLSENLASLQKAMGVLNAKRDDVQGRINREE). The NB-ARC domain maps to 141–443 (EAAPIAEVEE…CEGFIKEKQG (303 aa)). An ATP-binding site is contributed by 183–190 (GMGGVGKT). 7 LRR repeats span residues 517–538 (AVKR…PECV), 539–561 (ELIT…FFRC), 564–586 (SLAV…ISEL), 588–610 (SLQY…HELR), 611–633 (KLVH…SYLS), 634–655 (SLRT…MKEL), and 657–679 (LLEH…LFCY).

Belongs to the disease resistance NB-LRR family.

In terms of biological role, disease resistance (R) protein. The sequence is that of Disease resistance protein RFL1 (RFL1) from Arabidopsis thaliana (Mouse-ear cress).